The primary structure comprises 337 residues: tRNA-cytidine(32) 2-sulfurtransferase (337 aa).

Residues 71-76 carry the PP-loop motif motif; sequence SGGKDS. The [4Fe-4S] cluster site is built by Cys146, Cys149, and Cys237.

It belongs to the TtcA family. Homodimer. The cofactor is Mg(2+). [4Fe-4S] cluster is required as a cofactor.

It localises to the cytoplasm. It catalyses the reaction cytidine(32) in tRNA + S-sulfanyl-L-cysteinyl-[cysteine desulfurase] + AH2 + ATP = 2-thiocytidine(32) in tRNA + L-cysteinyl-[cysteine desulfurase] + A + AMP + diphosphate + H(+). It functions in the pathway tRNA modification. Catalyzes the ATP-dependent 2-thiolation of cytidine in position 32 of tRNA, to form 2-thiocytidine (s(2)C32). The sulfur atoms are provided by the cysteine/cysteine desulfurase (IscS) system. The sequence is that of tRNA-cytidine(32) 2-sulfurtransferase from Burkholderia vietnamiensis (strain G4 / LMG 22486) (Burkholderia cepacia (strain R1808)).